Reading from the N-terminus, the 873-residue chain is Putative receptor-like protein kinase At5g39000 (873 aa).

Residues 1–21 (MIRHALLIFSILVSTPIVGEG) form the signal peptide. The Extracellular portion of the chain corresponds to 22 to 445 (ATSTYEPTDV…KNKSHILPIT (424 aa)). 9 N-linked (GlcNAc...) asparagine glycosylation sites follow: Asn49, Asn64, Asn138, Asn168, Asn216, Asn266, Asn300, Asn340, and Asn437. Residues 446 to 466 (LAVVGSLVVLAMFVVGVLVIM) form a helical membrane-spanning segment. Topologically, residues 467–873 (KKKKKSKPST…FSEINEPKAR (407 aa)) are cytoplasmic. Residues 472-494 (SKPSTNSSWCPLPHGTDSTNTKP) form a disordered region. A Protein kinase domain is found at 518-803 (FEDKLIIGVG…EFALQLHETA (286 aa)). Residues 524-532 (IGVGGFGSV) and Lys547 contribute to the ATP site. Asp646 (proton acceptor) is an active-site residue. The tract at residues 813-843 (LDLMPSGEVGTTTDGEDDLFSRTTGHVGKST) is disordered. Residues 833-843 (SRTTGHVGKST) show a composition bias toward polar residues.

Belongs to the protein kinase superfamily. Ser/Thr protein kinase family.

It localises to the membrane. This is Putative receptor-like protein kinase At5g39000 from Arabidopsis thaliana (Mouse-ear cress).